Reading from the N-terminus, the 1277-residue chain is Clustered mitochondria protein 1 (1277 aa).

2 disordered regions span residues 19–39 (LPKE…QSSK) and 148–176 (LPLG…NTFK). The segment covering 27 to 36 (HNTKHLKKTQ) has biased composition (basic residues). Positions 153–176 (IKERSKQEEKDEKSDPEEKKNTFK) are enriched in basic and acidic residues. Positions 339–596 (PPNNPDYLRL…NTYPLDINFA (258 aa)) constitute a Clu domain. TPR repeat units follow at residues 704 to 738 (GINM…VEQD), 1020 to 1053 (AEKY…YERV), and 1148 to 1181 (GYTE…FTKQ). The tract at residues 1212–1277 (LAQDQMSTTG…TNNKKKHGKK (66 aa)) is disordered. The segment covering 1235–1249 (KKDDVKPELANKSVD) has biased composition (basic and acidic residues). The residue at position 1247 (Ser1247) is a Phosphoserine. Positions 1264-1277 (SKNKTNNKKKHGKK) are enriched in basic residues.

The protein belongs to the CLU family. May associate with the eukaryotic translation initiation factor 3 (eIF-3) complex. Associates with the 80S ribosome.

It localises to the cytoplasm. In terms of biological role, mRNA-binding protein involved in proper cytoplasmic distribution of mitochondria. The sequence is that of Clustered mitochondria protein 1 from Saccharomyces cerevisiae (strain ATCC 204508 / S288c) (Baker's yeast).